Here is a 622-residue protein sequence, read N- to C-terminus: Coiled-coil domain-containing protein 17 (622 aa).

3 coiled-coil regions span residues 81–102 (RSAL…QEMR), 146–207 (ARRV…LEVL), and 294–320 (GELP…RGRA). 2 disordered regions span residues 334-356 (SLQP…PLPP) and 584-622 (PAVG…PVSF). A compositionally biased stretch (pro residues) spans 344-356 (PLLPPPVAPPLPP). Over residues 593 to 615 (PRTEEPLSGVKDRDEGLGPHHSS) the composition is skewed to basic and acidic residues.

This chain is Coiled-coil domain-containing protein 17 (CCDC17), found in Homo sapiens (Human).